Reading from the N-terminus, the 1027-residue chain is Error-prone DNA polymerase (1027 aa).

Belongs to the DNA polymerase type-C family. DnaE2 subfamily.

Its subcellular location is the cytoplasm. It catalyses the reaction DNA(n) + a 2'-deoxyribonucleoside 5'-triphosphate = DNA(n+1) + diphosphate. In terms of biological role, DNA polymerase involved in damage-induced mutagenesis and translesion synthesis (TLS). It is not the major replicative DNA polymerase. This chain is Error-prone DNA polymerase, found in Dechloromonas aromatica (strain RCB).